We begin with the raw amino-acid sequence, 830 residues long: Probable mixed-linked glucan synthase 7 (830 aa).

The next 2 helical transmembrane spans lie at 61–81 (LTIF…ITYA) and 98–118 (AATF…MWVL). D186 is a catalytic residue. The stretch at 251 to 279 (ELVRDRRRVRREYEEMRLRIDALQAADAR) forms a coiled coil. 2 residues coordinate substrate: D367 and D369. The active site involves D529. 6 helical membrane passes run 613–633 (LFLM…GGGW), 638–658 (TPTY…VAVL), 676–696 (FWMV…ALKV), 735–755 (ALMA…AAAG), 776–796 (LPVA…LGLM), and 805–825 (PILF…CLLL).

It belongs to the glycosyltransferase 2 family. Plant cellulose synthase-like F subfamily. As to expression, expressed in mature pollen.

The protein resides in the golgi apparatus membrane. May catalyze both beta-1,3 and beta-1,4 glycosidic linkage on beta-D-glucan. Essential for (1,3;1,4)-beta-D-glucans synthesis in grasses and cereals (Poaceae). The mixed-linked glucans (which are not present in walls of dicotyledons or most other monocotyledonous plants) are particularly important constituents of the walls of the starchy endosperm and aleurone cells of cereal grains such as oats, wheat, rice and barley. They can account for up to 70% by weight of the wall. This is Probable mixed-linked glucan synthase 7 (CSLF7) from Oryza sativa subsp. japonica (Rice).